Consider the following 404-residue polypeptide: Odorant receptor 67c (404 aa).

At 1 to 45 the chain is on the cytoplasmic side; the sequence is METAKDNTARTFMELMRVPVQFYRTIGEDIYAHRSTNPLKSLLFK. The helical transmembrane segment at 46–66 threads the bilayer; that stretch reads IYLYAGFINFNLLVIGELVFF. Residues 67–79 are Extracellular-facing; sequence YNSIQDFETIRLA. Residues 80–100 traverse the membrane as a helical segment; the sequence is IAVAPCIGFSLVADFKQAAMI. Topologically, residues 101–139 are cytoplasmic; the sequence is RGKKTLIMLLDDLENMHPKTLAKQMEYKLPDFEKTMKRV. The helical transmembrane segment at 140 to 160 threads the bilayer; that stretch reads INIFTFLCLAYTTTFSFYPAI. Residues 161 to 204 are Extracellular-facing; it reads KASVKFNFLGYDTFDRNFGFLIWFPFDATRNNLIYWIMYWDIAH. A helical membrane pass occupies residues 205–225; sequence GAYLAGIAFLCADLLLVVVIT. Over 226-277 the chain is Cytoplasmic; it reads QICMHFNYISMRLEDHPCNSNEDKENIEFLIGIIRYHDKCLKLCEHVNDLYS. The helical transmembrane segment at 278-298 threads the bilayer; it reads FSLLLNFLMASMQICFIAFQV. Residues 299 to 304 lie on the Extracellular side of the membrane; the sequence is TESTVE. The helical transmembrane segment at 305-326 threads the bilayer; sequence VIIIYCIFLMTSMVQVFMVCYY. Over 327 to 373 the chain is Cytoplasmic; it reads GDTLIAASLKVGDAAYNQKWFQCSKSYCTMLKLLIMRSQKPASIRPP. The helical transmembrane segment at 374 to 394 threads the bilayer; that stretch reads TFPPISLVTYMKVISMSYQFF. Residues 395–404 are Extracellular-facing; that stretch reads ALLRTTYSNN.

This sequence belongs to the insect chemoreceptor superfamily. Heteromeric odorant receptor channel (TC 1.A.69) family. Or49a subfamily. Interacts with Orco. Complexes exist early in the endomembrane system in olfactory sensory neurons (OSNs), coupling these complexes to the conserved ciliary trafficking pathway. In terms of tissue distribution, expressed in olfactory sensory neurons in the antenna.

It localises to the cell membrane. Functionally, odorant receptor which mediates acceptance or avoidance behavior, depending on its substrates. The odorant receptor repertoire encodes a large collection of odor stimuli that vary widely in identity, intensity, and duration. May form a complex with Orco to form odorant-sensing units, providing sensitive and prolonged odorant signaling and calcium permeability. In Drosophila melanogaster (Fruit fly), this protein is Odorant receptor 67c (Or67c).